Reading from the N-terminus, the 248-residue chain is UPF0273 protein APE_1505.1 (248 aa).

One can recognise a KaiC domain in the interval D3–I247. Position 30–37 (G30–S37) interacts with ATP.

It belongs to the UPF0273 family.

The protein is UPF0273 protein APE_1505.1 of Aeropyrum pernix (strain ATCC 700893 / DSM 11879 / JCM 9820 / NBRC 100138 / K1).